The chain runs to 201 residues: Oligoribonuclease (201 aa).

One can recognise an Exonuclease domain in the interval 20-183 (LVWLDMEMTG…ADIHESIDEL (164 aa)). Residue Y141 is part of the active site.

It belongs to the oligoribonuclease family.

The protein resides in the cytoplasm. Functionally, 3'-to-5' exoribonuclease specific for small oligoribonucleotides. The sequence is that of Oligoribonuclease from Burkholderia pseudomallei (strain 1106a).